The chain runs to 430 residues: tRNA(Ile)-lysidine synthase (430 aa).

24 to 29 (SGGLDS) contributes to the ATP binding site.

The protein belongs to the tRNA(Ile)-lysidine synthase family.

Its subcellular location is the cytoplasm. The enzyme catalyses cytidine(34) in tRNA(Ile2) + L-lysine + ATP = lysidine(34) in tRNA(Ile2) + AMP + diphosphate + H(+). Its function is as follows. Ligates lysine onto the cytidine present at position 34 of the AUA codon-specific tRNA(Ile) that contains the anticodon CAU, in an ATP-dependent manner. Cytidine is converted to lysidine, thus changing the amino acid specificity of the tRNA from methionine to isoleucine. In Haemophilus influenzae (strain PittGG), this protein is tRNA(Ile)-lysidine synthase.